The chain runs to 352 residues: Ion-translocating oxidoreductase complex subunit D (352 aa).

The next 4 helical transmembrane spans lie at 20–40 (IMLLVLLAAVPGIAAQLWFFG), 42–62 (GTLVQILLASVSALLAEALVL), 89–109 (IPPLAPWWMVVLGTVFAVIIA), and 123–143 (PAMIGYVVLLISFPVQMTSWL). FMN phosphoryl threonine is present on threonine 187. 5 consecutive transmembrane segments (helical) span residues 214–234 (ILAGAGWQWVNLAWLAGGVWL), 242–262 (WHVPLSFLVTLALCATLGWLF), 267–287 (LAAPQIHLLSGATMLGAFFIL), 301–321 (LIFGALAGLLVWMIRSFGGYP), and 322–342 (DGVAFAVLLANITVPLIDYYT).

The protein belongs to the NqrB/RnfD family. As to quaternary structure, the complex is composed of six subunits: RsxA, RsxB, RsxC, RsxD, RsxE and RsxG. Requires FMN as cofactor.

Its subcellular location is the cell inner membrane. In terms of biological role, part of a membrane-bound complex that couples electron transfer with translocation of ions across the membrane. Required to maintain the reduced state of SoxR. This chain is Ion-translocating oxidoreductase complex subunit D, found in Escherichia coli (strain UTI89 / UPEC).